A 264-amino-acid polypeptide reads, in one-letter code: Thymidylate synthase (264 aa).

Residues arginine 21 and 126–127 each bind dUMP; that span reads RR. Cysteine 146 acts as the Nucleophile in catalysis. DUMP contacts are provided by residues 166–169, asparagine 177, and 207–209; these read RSAD and HLY. Position 169 (aspartate 169) interacts with (6R)-5,10-methylene-5,6,7,8-tetrahydrofolate. Alanine 263 lines the (6R)-5,10-methylene-5,6,7,8-tetrahydrofolate pocket.

It belongs to the thymidylate synthase family. Bacterial-type ThyA subfamily. In terms of assembly, homodimer.

It is found in the cytoplasm. It carries out the reaction dUMP + (6R)-5,10-methylene-5,6,7,8-tetrahydrofolate = 7,8-dihydrofolate + dTMP. It functions in the pathway pyrimidine metabolism; dTTP biosynthesis. Functionally, catalyzes the reductive methylation of 2'-deoxyuridine-5'-monophosphate (dUMP) to 2'-deoxythymidine-5'-monophosphate (dTMP) while utilizing 5,10-methylenetetrahydrofolate (mTHF) as the methyl donor and reductant in the reaction, yielding dihydrofolate (DHF) as a by-product. This enzymatic reaction provides an intracellular de novo source of dTMP, an essential precursor for DNA biosynthesis. This is Thymidylate synthase from Bradyrhizobium sp. (strain ORS 278).